The following is a 331-amino-acid chain: Putative type II secretion system C-type protein YghF (331 aa).

The chain crosses the membrane as a helical span at residues M44–L60.

Belongs to the GSP C family.

The protein localises to the cell inner membrane. Functionally, involved in a type II secretion system (T2SS, formerly general secretion pathway, GSP) for the export of folded proteins across the outer membrane. This Escherichia coli (strain K12) protein is Putative type II secretion system C-type protein YghF.